A 108-amino-acid chain; its full sequence is uncharacterized protein (108 aa).

Positions 1–20 are cleaved as a signal peptide; sequence MNLKSIIFVLFIAFFAFSLA. Asn-39 carries N-linked (GlcNAc...) asparagine glycosylation.

This sequence belongs to the Dictyostelium gerABC family.

It is found in the secreted. This is an uncharacterized protein from Dictyostelium discoideum (Social amoeba).